Here is a 4568-residue protein sequence, read N- to C-terminus: Dynein heavy chain, cytoplasmic (4568 aa).

A stem region spans residues 1-1826; the sequence is MDSGNESSII…VVKMANSQFF (1826 aa). 5 coiled-coil regions span residues 587–652, 814–844, 1241–1274, 1324–1340, and 1559–1591; these read QTRL…VLGK, KLAETVNTYQERCEELLNVVRIVNADLNVLK, QEALNVITAFEAKLNKLTEERNKMRKARVALDLS, RKIRQSLDELMNQLKQL, and VNMQGAQRLLERLADMLAKIQKALGEYLERERS. AAA stretches follow at residues 1827-2049, 2118-2394, 2498-2747, and 2842-3111; these read YGFE…VLVS, QQLS…PTPQ, EIES…WVRG, and GFYE…GHRV. ATP contacts are provided by residues 1865 to 1872, 2163 to 2170, 2537 to 2544, and 2880 to 2887; these read GPAGTGKT, GSSGSGKT, GPPGSGKT, and GTAGAGKT. Coiled coils occupy residues 3132–3229, 3339–3432, and 3707–3739; these read EKRS…AQVE, ARAQ…RDRW, and NSVIETLEKLKNEAAEVAQKSAETDKVMAEVDA. A stalk region spans residues 3132–3432; it reads EKRSDLEEEK…SSLRSERDRW (301 aa). AAA stretches follow at residues 3496–3725 and 3954–4169; these read LSTV…EVAQ and AHRV…TLDA. Positions 4359–4386 form a coiled coil; that stretch reads QLLKDIRRDLNEISAVCRAEKKQNNETR.

The protein belongs to the dynein heavy chain family. In terms of assembly, consists of at least two heavy chains and a number of intermediate and light chains.

It localises to the cytoplasm. The protein localises to the cytoskeleton. Its function is as follows. Cytoplasmic dynein acts as a motor for the intracellular retrograde motility of vesicles and organelles along microtubules. Dynein has ATPase activity; the force-producing power stroke is thought to occur on release of ADP. May play a role in nuclear migration in hypodermal precursor cells. May be involved in the transport of synaptic vesicle components towards the axon of the DA motor neuron. This function may involve the regulation of dynein by pct-1 and/or cdk-5. Involved in the formation of synapses in the dorsal region during synaptic remodeling of DD motor neurons. Required for anterograde trafficking of dense-core vesicles in the DB motor neuron dendrites. Required for the formation of dendritic branches of PVD sensory neurons. May also play a role in GABAergic synaptic vesicle localization in the ventral nerve cord. May play a role in the pairing of homologous chromosomes during meiosis. This chain is Dynein heavy chain, cytoplasmic, found in Caenorhabditis elegans.